A 357-amino-acid chain; its full sequence is Probable cinnamyl alcohol dehydrogenase (357 aa).

Cysteine 47 contributes to the Zn(2+) binding site. Threonine 49 lines the NADP(+) pocket. 7 residues coordinate Zn(2+): histidine 69, glutamate 70, cysteine 100, cysteine 103, cysteine 106, cysteine 114, and cysteine 163. Residues threonine 167, 188 to 193 (GLGGVG), 211 to 216 (SSSDKK), threonine 251, glycine 275, and 298 to 300 (SFI) contribute to the NADP(+) site.

The protein belongs to the zinc-containing alcohol dehydrogenase family. Homodimer. It depends on Zn(2+) as a cofactor.

It catalyses the reaction (E)-cinnamyl alcohol + NADP(+) = (E)-cinnamaldehyde + NADPH + H(+). It carries out the reaction (E)-coniferol + NADP(+) = (E)-coniferaldehyde + NADPH + H(+). The catalysed reaction is (E)-sinapyl alcohol + NADP(+) = (E)-sinapaldehyde + NADPH + H(+). The enzyme catalyses (E)-4-coumaroyl alcohol + NADP(+) = (E)-4-coumaraldehyde + NADPH + H(+). It catalyses the reaction (E)-caffeyl alcohol + NADP(+) = (E)-caffeyl aldehyde + NADPH + H(+). It functions in the pathway aromatic compound metabolism; phenylpropanoid biosynthesis. Involved in lignin biosynthesis. Catalyzes the final step specific for the production of lignin monomers. Catalyzes the NADPH-dependent reduction of coniferaldehyde, 5-hydroxyconiferaldehyde, sinapaldehyde, 4-coumaraldehyde and caffeyl aldehyde to their respective alcohols. The polypeptide is Probable cinnamyl alcohol dehydrogenase (Populus deltoides (Eastern poplar)).